We begin with the raw amino-acid sequence, 611 residues long: Sodium-coupled monocarboxylate transporter 1 (611 aa).

At 1-9 the chain is on the extracellular side; it reads MDASRDIGS. The chain crosses the membrane as a helical span at residues 10-30; sequence FVVWDYVVFAGMLLISAAIGI. The Cytoplasmic portion of the chain corresponds to 31-51; the sequence is YYAFAGGGQQTSKDFLMGGRS. The helical transmembrane segment at 52–72 threads the bilayer; that stretch reads MSAVPVALSLTASFMSAVTVL. At 73 to 86 the chain is on the extracellular side; that stretch reads GTPAEVYRFGAIFS. The helical transmembrane segment at 87–107 threads the bilayer; sequence IFVITYFFVVVISAEVFLPVF. At 108–132 the chain is on the cytoplasmic side; the sequence is YRLGITSTYEYLELRFNRCIRLCGT. Residues 133 to 153 traverse the membrane as a helical segment; the sequence is ILFIVQTILYTGIVIYAPALA. At 154-161 the chain is on the extracellular side; it reads LNQVTGFD. Residues 162-182 form a helical membrane-spanning segment; the sequence is LWGAVVATGVVCTFYCTLGGL. Residues 183–184 are Cytoplasmic-facing; sequence KA. The helical transmembrane segment at 185 to 205 threads the bilayer; the sequence is VVWTDVFQVGIMVAGFASVII. Residues 206–239 lie on the Extracellular side of the membrane; it reads QASITQHGINKILSDAFNGGRLNFWNFDPNPLQR. Residues 240–260 traverse the membrane as a helical segment; it reads HTFWTIVIGGTFTWTTIYGVN. The Cytoplasmic segment spans residues 261 to 279; that stretch reads QSQVQRYISCKSRLHAKLS. Residues 280-300 form a helical membrane-spanning segment; it reads LYVNLVGLWVILTCSIFCGLA. At 301–336 the chain is on the extracellular side; it reads LYSRYRECDPWTSKKVSAIDQLMPYLVLDILKNYPG. A helical transmembrane segment spans residues 337 to 359; the sequence is VPGLFVACAYSGTLSTVSSSINA. The Cytoplasmic portion of the chain corresponds to 360–389; that stretch reads LAAVTVEDLIKPRFKSLSEKSLSWISQGMS. Residues 390 to 410 form a helical membrane-spanning segment; sequence VLYGALCIGMAALASLMGALL. The Extracellular portion of the chain corresponds to 411–415; it reads QAALS. A helical membrane pass occupies residues 416-436; the sequence is IFGMVGGPLLGLFSLGILVPF. Over 437 to 439 the chain is Cytoplasmic; it reads ANS. Residues 440–460 form a helical membrane-spanning segment; the sequence is IGALTGLLAGFAISLWVGIGA. At 461 to 518 the chain is on the extracellular side; it reads QLYPPLPERTLPLPLETYGCNITHNGSDWMSTTEMPFSTSAFQIHNAERTPLMDNWYS. N485 is a glycosylation site (N-linked (GlcNAc...) asparagine). The chain crosses the membrane as a helical span at residues 519–539; sequence LSYLYFSTIGTLTTLFVGILI. Over 540 to 611 the chain is Cytoplasmic; that stretch reads SLSTGGRKQN…HSGKINGTRL (72 aa). The PDZ-binding signature appears at 609 to 611; sequence TRL.

Belongs to the sodium:solute symporter (SSF) (TC 2.A.21) family. Interacts (via PDZ-binding motif) with PDZK1 (via PDZ domains 1 and 3); interaction increases nicotinate transport activity of SLC5A8. In terms of tissue distribution, expressed in brain, colon, kidney and in the ileum and jejunum of small intestine. In the kidney, expression occurred in the proximal tubule and the loop of Henle, being restricted to tubular epithelial cells in both the cortex and the medulla. In the colon, predominantly expressed in the distal half of the large bowel and in the most terminal ileum. Localized selectively in the luminal surface of crypts in the large intestine and to the brush border in the middle parts of crypts in the cecum. In the brain, expression was seen throughout, exclusively in neurons, including the cortex, hippocampus, cerebellum and pituitary gland (at protein level). Expression is reduced in oligodendrogliomas.

Its subcellular location is the apical cell membrane. It carries out the reaction (S)-lactate(out) + 2 Na(+)(out) = (S)-lactate(in) + 2 Na(+)(in). The catalysed reaction is propanoate(out) + 2 Na(+)(out) = propanoate(in) + 2 Na(+)(in). It catalyses the reaction pyruvate(out) + 2 Na(+)(out) = pyruvate(in) + 2 Na(+)(in). The enzyme catalyses acetate(out) + 2 Na(+)(out) = acetate(in) + 2 Na(+)(in). It carries out the reaction butanoate(out) + 2 Na(+)(out) = butanoate(in) + 2 Na(+)(in). The catalysed reaction is nicotinate(out) + 2 Na(+)(out) = nicotinate(in) + 2 Na(+)(in). It catalyses the reaction (R)-3-hydroxybutanoate(out) + 2 Na(+)(out) = (R)-3-hydroxybutanoate(in) + 2 Na(+)(in). The enzyme catalyses acetoacetate(out) + 2 Na(+)(out) = acetoacetate(in) + 2 Na(+)(in). It carries out the reaction 4-methyl-2-oxopentanoate(out) + 2 Na(+)(out) = 4-methyl-2-oxopentanoate(in) + 2 Na(+)(in). The catalysed reaction is 5-oxo-L-proline(out) + 2 Na(+)(out) = 5-oxo-L-proline(in) + 2 Na(+)(in). It catalyses the reaction iodide(out) = iodide(in). The enzyme catalyses chloride(in) = chloride(out). It carries out the reaction nitrate(in) = nitrate(out). The catalysed reaction is bromide(in) = bromide(out). Transport of D-lactate and pyruvate stimulated by alpha-cyano-4-hydroxycinnamic acid, but inhibited by the short-chain fatty acids acetate, propionate and butyrate. Acts as an electrogenic sodium (Na(+)) and chloride (Cl-)-dependent sodium-coupled solute transporter, including transport of monocarboxylates (short-chain fatty acids including L-lactate, D-lactate, pyruvate, acetate, propionate, valerate and butyrate), mocarboxylate drugs (nicotinate, benzoate, salicylate and 5-aminosalicylate) and ketone bodies (beta-D-hydroxybutyrate, acetoacetate and alpha-ketoisocaproate), with a Na(+):substrate stoichiometry of between 4:1 and 2:1. Catalyzes passive carrier mediated diffusion of iodide. Mediates iodide transport from the thyrocyte into the colloid lumen through the apical membrane. May be responsible for the absorption of D-lactate and monocarboxylate drugs from the intestinal tract. May play a critical role in the entry of L-lactate and ketone bodies into neurons by a process driven by an electrochemical Na(+) gradient and hence contribute to the maintenance of the energy status and function of neurons. Mediates sodium-coupled electrogenic transport of pyroglutamate (5-oxo-L-proline). Can mediate the transport of chloride, bromide, iodide and nitrate ions when external concentration of sodium ions is reduced. The polypeptide is Sodium-coupled monocarboxylate transporter 1 (Mus musculus (Mouse)).